Here is a 265-residue protein sequence, read N- to C-terminus: Adenosylcobinamide-GDP ribazoletransferase (265 aa).

A run of 5 helical transmembrane segments spans residues 59-79 (LSWILPIEISIILGMILSVLI), 113-133 (IGTFGSIGLILSLGLKYLLLV), 141-161 (WIFLFTSWFSHSASRWFALLL), 183-203 (LPPFDFALSTFFGCFPAVYFL), and 206-226 (FQNQIPNVLLGFFLSSIFVFY).

This sequence belongs to the CobS family. It depends on Mg(2+) as a cofactor.

Its subcellular location is the cell inner membrane. It carries out the reaction alpha-ribazole + adenosylcob(III)inamide-GDP = adenosylcob(III)alamin + GMP + H(+). It catalyses the reaction alpha-ribazole 5'-phosphate + adenosylcob(III)inamide-GDP = adenosylcob(III)alamin 5'-phosphate + GMP + H(+). The protein operates within cofactor biosynthesis; adenosylcobalamin biosynthesis; adenosylcobalamin from cob(II)yrinate a,c-diamide: step 7/7. In terms of biological role, joins adenosylcobinamide-GDP and alpha-ribazole to generate adenosylcobalamin (Ado-cobalamin). Also synthesizes adenosylcobalamin 5'-phosphate from adenosylcobinamide-GDP and alpha-ribazole 5'-phosphate. This chain is Adenosylcobinamide-GDP ribazoletransferase, found in Leptospira interrogans serogroup Icterohaemorrhagiae serovar copenhageni (strain Fiocruz L1-130).